The sequence spans 37 residues: Large ribosomal subunit protein bL36 (37 aa).

It belongs to the bacterial ribosomal protein bL36 family.

This Acetivibrio thermocellus (strain ATCC 27405 / DSM 1237 / JCM 9322 / NBRC 103400 / NCIMB 10682 / NRRL B-4536 / VPI 7372) (Clostridium thermocellum) protein is Large ribosomal subunit protein bL36.